Reading from the N-terminus, the 365-residue chain is Putative ankyrin repeat protein R903 (365 aa).

ANK repeat units lie at residues 38–67 (NINS…DIRF), 68–97 (QNNE…DIFI), 99–127 (NNFC…KFSN), 129–158 (SKPI…NINK), 184–213 (KFKD…GNIT), 214–243 (VSNN…RFPR), 245–273 (SNEL…SIVD), 275–298 (LLNI…LKNV), 299–328 (NLQK…NPDE), and 330–361 (RTYL…KLQS).

The protein is Putative ankyrin repeat protein R903 of Acanthamoeba polyphaga mimivirus (APMV).